We begin with the raw amino-acid sequence, 384 residues long: G protein-coupled receptor 88 (384 aa).

At 1 to 35 (MTNSSSTSTSTTTGGSLLLLCEEEESWAGRRIPVS) the chain is on the extracellular side. A glycan (N-linked (GlcNAc...) asparagine) is linked at N3. A helical transmembrane segment spans residues 36–56 (LLYSGLAIGGTLANGMVIYLV). Residues 57 to 73 (SSFRKLQTTSNAFIVNG) lie on the Cytoplasmic side of the membrane. The chain crosses the membrane as a helical span at residues 74–94 (CAADLSVCALWMPQEAVLGLL). The Extracellular portion of the chain corresponds to 95 to 116 (PSGSAEPPGDWDGGGGSYRLLR). The helical transmembrane segment at 117–136 (GGLLGLGLTVSLLSHCLVAL) threads the bilayer. The Cytoplasmic segment spans residues 137 to 158 (NRYLLITRAPATYQVLYQRRHT). The helical transmembrane segment at 159-179 (VGMLALSWALALGLVLLLPPW) threads the bilayer. Topologically, residues 180 to 195 (APKPGAEPPQVHYPAL) are extracellular. Residues 196-216 (LAAGALLAQTALLLHCYLGIV) traverse the membrane as a helical segment. At 217–285 (RRVRVSVKRV…RAQRRLSGLS (69 aa)) the chain is on the cytoplasmic side. A helical transmembrane segment spans residues 286–306 (VLLLCCVFLLATQPLVWVSLA). The Extracellular segment spans residues 307–310 (SGFS). The helical transmembrane segment at 311 to 331 (LPVPWGVQAASWLLCCALSAL) threads the bilayer. Over 332–384 (NPLLYTWRNEEFRRSVRSVLPGVGDAAAAAAAATAVPAMSQAQLGTRAAGQHW) the chain is Cytoplasmic.

The protein belongs to the G-protein coupled receptor 1 family. In terms of tissue distribution, expressed predominantly in the striatum.

It localises to the cell membrane. The protein resides in the cell projection. Its subcellular location is the cilium membrane. The protein localises to the cytoplasm. It is found in the nucleus. In terms of biological role, orphan G protein-coupled receptor implicated in a large repertoire of behavioral responses that engage motor activities, spatial learning, and emotional processing. May play a role in the regulation of cognitive and motor function. Couples with the heterotrimeric G protein complex of the G(i) subfamily, consisting of GNAI1, GNB1 and GNG2, thereby acting through a G(i)-mediated pathway. Plays a role in the attenuation of D1 dopamine receptor (D1R)-mediated cAMP response in ciliated cells. In on-ciliated cells, involved in the inhibition of the beta-2 adrenergic receptor (B2AR) response. The sequence is that of G protein-coupled receptor 88 (Gpr88) from Mus musculus (Mouse).